The following is a 251-amino-acid chain: Triosephosphate isomerase 1 (251 aa).

Residue 9-11 (NWK) coordinates substrate. H95 serves as the catalytic Electrophile. The active-site Proton acceptor is E167. Substrate is bound by residues G173, S213, and 234-235 (GG).

Belongs to the triosephosphate isomerase family. As to quaternary structure, homodimer.

It localises to the cytoplasm. It catalyses the reaction D-glyceraldehyde 3-phosphate = dihydroxyacetone phosphate. Its pathway is carbohydrate biosynthesis; gluconeogenesis. The protein operates within carbohydrate degradation; glycolysis; D-glyceraldehyde 3-phosphate from glycerone phosphate: step 1/1. Functionally, involved in the gluconeogenesis. Catalyzes stereospecifically the conversion of dihydroxyacetone phosphate (DHAP) to D-glyceraldehyde-3-phosphate (G3P). The polypeptide is Triosephosphate isomerase 1 (Listeria monocytogenes serovar 1/2a (strain ATCC BAA-679 / EGD-e)).